Here is a 432-residue protein sequence, read N- to C-terminus: MTELISIRESSKHVDEEVRMHVWLTDKRSSGKIVFLQLRDGTAFFQGVVRKNDVSEEVFEAAKGLRQEASFYLTGTIHEDARSHFGYEIQISDLEVVSNNEGYPITNKEHGIDFLLDHRHLWLRSRRPFAIMQIRNRIFKATVDFFENEGFVKFDAPLLMHSAPEGTTELFHIDYFNHDAYLSQSGQLYGEVGAEAFGKIFTFGPTFRAEASKTRRHLTEFWMMEPEMAWMHQDESLDLQERFLSYVVGQVLEHCEYELSILGRDVDKLRPAAEGNYTRLSYDDAVKMLQEAGKDFKWGDDFGAPDEAFLSEQFDRPFFIVNYPVAIKPFYMKKNPENPLTYLCADVEAPEGYGEIMGGSEREADYDTLKAQIEEAGLNLDDYSWYLDLRKYGSVPHSGFGMGFERVIAWICKLDHVREAVPFPRMINRMQP.

This sequence belongs to the class-II aminoacyl-tRNA synthetase family. In terms of assembly, homodimer.

It localises to the cytoplasm. The enzyme catalyses tRNA(Asn) + L-asparagine + ATP = L-asparaginyl-tRNA(Asn) + AMP + diphosphate + H(+). The chain is Asparagine--tRNA ligase from Lactobacillus delbrueckii subsp. bulgaricus (strain ATCC 11842 / DSM 20081 / BCRC 10696 / JCM 1002 / NBRC 13953 / NCIMB 11778 / NCTC 12712 / WDCM 00102 / Lb 14).